A 387-amino-acid chain; its full sequence is Large ribosomal subunit protein uL3 (387 aa).

This sequence belongs to the universal ribosomal protein uL3 family.

The protein localises to the cytoplasm. In Kluyveromyces lactis (strain ATCC 8585 / CBS 2359 / DSM 70799 / NBRC 1267 / NRRL Y-1140 / WM37) (Yeast), this protein is Large ribosomal subunit protein uL3 (RPL3).